The primary structure comprises 77 residues: MARVCKVTGKRPMSGNNVSHANNKTKRRFLPNLQSRRFWVESENRWVRLRVSNAALRTIDKVGIDVVLADLRARGEA.

Residues 1–26 are disordered; it reads MARVCKVTGKRPMSGNNVSHANNKTK.

The protein belongs to the bacterial ribosomal protein bL28 family.

The polypeptide is Large ribosomal subunit protein bL28 (Neisseria gonorrhoeae (strain ATCC 700825 / FA 1090)).